Reading from the N-terminus, the 423-residue chain is MSASAVFILDVKGKPLISRNYKGDVAMSEIDHFMPLLMQREEEGALTPLLSHGRVHFLWIKYSNLYLVATTLKNANASLVYSFLYKIVEVFSEYFKELEEESIRDNFVIVYELLDELMDFGFPQTTDSKILQEYITQQGNKLETGKSRVPPTVTNAVSWRSEGIKYKKNEVFIDVIESVNLLVNANGSVLLSEIVGSIKLKVFLSGMPELRLGLNDRVLFELTGRSKNKSVELEDVKFHQCVRLSRFDNDRTISFIPPDGDFELMSYRLSTQVKPLIWIESVIEKFSHSRVEIMVKAKGQFKKQSVANGVEISVPVPSDADSPRFKTSVGSAKYVPEKNTVIWSIKSFPGGKEYLMRAHFGLPSVEKEEVEGRPPIGVKFEIPYFTVSGIQVRYMKIIEKSGYQALPWVRYITQSGDYQLRTS.

The MHD domain occupies 168 to 421 (KNEVFIDVIE…ITQSGDYQLR (254 aa)).

This sequence belongs to the adaptor complexes medium subunit family. Adaptor protein complex 1 (AP-1) is a heterotetramer composed of two large adaptins (gamma-type subunit AP1G1 and beta-type subunit AP1B1), a medium adaptin (mu-type subunit AP1M1 or AP1M2) and a small adaptin (sigma-type subunit AP1S1 or AP1S2 or AP1S3). Interacts with P2X4. Post-translationally, phosphorylation of membrane-bound AP1M1/AP1M2 increases its affinity for sorting signals.

It localises to the cytoplasmic vesicle. Its subcellular location is the clathrin-coated vesicle membrane. The protein localises to the golgi apparatus. In terms of biological role, subunit of clathrin-associated adaptor protein complex 1 that plays a role in protein sorting in the trans-Golgi network (TGN) and endosomes. The AP complexes mediate the recruitment of clathrin to membranes and the recognition of sorting signals within the cytosolic tails of transmembrane cargo molecules. This is AP-1 complex subunit mu-2 from Bos taurus (Bovine).